Here is a 7603-residue protein sequence, read N- to C-terminus: Cysteine repeat modular protein B (7603 aa).

Residue Asn172 is glycosylated (N-linked (GlcNAc...) asparagine). A helical transmembrane segment spans residues 223–243 (LVGFFLVPVFVVFFVLSSDAT). Disordered stretches follow at residues 248 to 275 (GVGV…SSPG) and 291 to 323 (RDTK…GKGF). Over residues 263–275 (SVSSSSRASSSPG) the composition is skewed to low complexity. Residues 302–313 (SSRRSARARRRR) are compositionally biased toward basic residues. N-linked (GlcNAc...) asparagine glycosylation is found at Asn329, Asn589, Asn848, Asn1128, Asn1183, and Asn1402. The interval 1554 to 1574 (VLRSRSGPSHPSSVSQPSPSF) is disordered. The segment covering 1557 to 1573 (SRSGPSHPSSVSQPSPS) has biased composition (low complexity). N-linked (GlcNAc...) asparagine glycosylation is found at Asn1622, Asn2578, Asn2664, Asn3094, and Asn3126. Positions 3316-3445 (SNAVPEADEN…SDLTTSQPED (130 aa)) are disordered. A compositionally biased stretch (acidic residues) spans 3321-3340 (EADENQVESAEPEQNAEGET). The span at 3342–3360 (EQGAEEAGGNAAEPGAESG) shows a compositional bias: low complexity. Residues Asn3546, Asn4367, Asn4823, Asn4901, Asn5186, Asn5546, and Asn5666 are each glycosylated (N-linked (GlcNAc...) asparagine). The segment at 5758–5799 (LAESRSDDGTVGDDVDLDDNALSGTTNSGWTTSSSNSERVRK) is disordered. Positions 5767–5776 (TVGDDVDLDD) are enriched in acidic residues. The segment covering 5780 to 5794 (SGTTNSGWTTSSSNS) has biased composition (low complexity). N-linked (GlcNAc...) asparagine glycans are attached at residues Asn5806, Asn5876, Asn5998, Asn6055, and Asn6369. The tract at residues 6043 to 6115 (GEADHTPADG…EASEAESVSA (73 aa)) is disordered. Over residues 6051 to 6060 (DGSSNSSEDS) the composition is skewed to polar residues. The segment covering 6391 to 6405 (EFTDTGPAPDDHTDE) has biased composition (basic and acidic residues). The disordered stretch occupies residues 6391 to 6436 (EFTDTGPAPDDHTDEGGANLDSTGGSGEPSSSAPVDPSGENEGQLL). Over residues 6410–6423 (LDSTGGSGEPSSSA) the composition is skewed to polar residues. The N-linked (GlcNAc...) asparagine glycan is linked to Asn6453. The next 8 membrane-spanning stretches (helical) occupy residues 6520-6540 (IFIL…ALTI), 6552-6572 (VLIR…LMPA), 6578-6598 (LAGW…ALHP), 6627-6647 (IFVP…CVAT), 6770-6790 (LILG…GFVA), 6831-6851 (CVAL…QEIF), 6888-6908 (GLMV…FEVF), and 6912-6932 (GAIP…SLFV). An N-linked (GlcNAc...) asparagine glycan is attached at Asn7013. A helical transmembrane segment spans residues 7017–7037 (FVAALSDSLSQLVIAWCQFTI). Asn7061 carries an N-linked (GlcNAc...) asparagine glycan. The stretch at 7174-7242 (APQLRKENHA…RGLIESEIDD (69 aa)) forms a coiled coil. Residues 7379–7603 (AAPAAGLRSH…LKKPGSPKQE (225 aa)) are disordered. Residues 7408-7417 (LGTNLSTPSA) are compositionally biased toward polar residues. Asn7411 carries an N-linked (GlcNAc...) asparagine glycan. 3 stretches are compositionally biased toward low complexity: residues 7474-7496 (PTPS…SVTP), 7509-7541 (SEAP…SSDL), and 7560-7582 (GEAA…AAQP).

As to quaternary structure, component of a complex, at least composed of cysteine repeat modular protein A (CRMPa), cysteine repeat modular protein B (CRMPb), micronemal protein 15 (MIC15) and thrombospondin type 1 domain-containing protein (TSP1).

It localises to the cell membrane. The protein localises to the endoplasmic reticulum. The protein resides in the golgi apparatus. Its function is as follows. Required for triggering rhoptry secretion. Plays a role in host cell invasion. The protein is Cysteine repeat modular protein B of Toxoplasma gondii.